Reading from the N-terminus, the 229-residue chain is 7-cyano-7-deazaguanine synthase (229 aa).

12 to 22 contacts ATP; sequence LSGGMDSCVCA. Positions 194, 202, 205, and 208 each coordinate Zn(2+).

It belongs to the QueC family. It depends on Zn(2+) as a cofactor.

The enzyme catalyses 7-carboxy-7-deazaguanine + NH4(+) + ATP = 7-cyano-7-deazaguanine + ADP + phosphate + H2O + H(+). The protein operates within purine metabolism; 7-cyano-7-deazaguanine biosynthesis. Catalyzes the ATP-dependent conversion of 7-carboxy-7-deazaguanine (CDG) to 7-cyano-7-deazaguanine (preQ(0)). In Acidobacterium capsulatum (strain ATCC 51196 / DSM 11244 / BCRC 80197 / JCM 7670 / NBRC 15755 / NCIMB 13165 / 161), this protein is 7-cyano-7-deazaguanine synthase.